Consider the following 715-residue polypeptide: Putative membrane protein IgaA homolog (715 aa).

5 helical membrane passes run 2–22 (STIV…GLLW), 214–234 (EACA…GPTV), 235–255 (TLPW…WYLF), 349–369 (NLTL…YVPL), and 663–683 (ATSL…VLLI).

Belongs to the IgaA family.

The protein resides in the cell inner membrane. The sequence is that of Putative membrane protein IgaA homolog from Yersinia pestis.